The sequence spans 402 residues: NADH-quinone oxidoreductase subunit D (402 aa).

The protein belongs to the complex I 49 kDa subunit family. In terms of assembly, NDH-1 is composed of 14 different subunits. Subunits NuoB, C, D, E, F, and G constitute the peripheral sector of the complex.

It is found in the cell inner membrane. It catalyses the reaction a quinone + NADH + 5 H(+)(in) = a quinol + NAD(+) + 4 H(+)(out). NDH-1 shuttles electrons from NADH, via FMN and iron-sulfur (Fe-S) centers, to quinones in the respiratory chain. The immediate electron acceptor for the enzyme in this species is believed to be ubiquinone. Couples the redox reaction to proton translocation (for every two electrons transferred, four hydrogen ions are translocated across the cytoplasmic membrane), and thus conserves the redox energy in a proton gradient. This Rhodopseudomonas palustris (strain ATCC BAA-98 / CGA009) protein is NADH-quinone oxidoreductase subunit D.